The sequence spans 760 residues: 5-methyltetrahydropteroyltriglutamate--homocysteine methyltransferase (760 aa).

5-methyltetrahydropteroyltri-L-glutamate-binding positions include 17-20 (RELK) and K118. L-homocysteine is bound by residues 436 to 438 (IGS) and E489. Residues 436–438 (IGS) and E489 each bind L-methionine. 5-methyltetrahydropteroyltri-L-glutamate-binding positions include 520-521 (RC) and W566. Position 604 (D604) interacts with L-homocysteine. D604 is an L-methionine binding site. A 5-methyltetrahydropteroyltri-L-glutamate-binding site is contributed by E610. Zn(2+) contacts are provided by H646, C648, and E670. H699 serves as the catalytic Proton donor. C731 is a Zn(2+) binding site.

This sequence belongs to the vitamin-B12 independent methionine synthase family. The cofactor is Zn(2+).

The catalysed reaction is 5-methyltetrahydropteroyltri-L-glutamate + L-homocysteine = tetrahydropteroyltri-L-glutamate + L-methionine. It participates in amino-acid biosynthesis; L-methionine biosynthesis via de novo pathway; L-methionine from L-homocysteine (MetE route): step 1/1. Catalyzes the transfer of a methyl group from 5-methyltetrahydrofolate to homocysteine resulting in methionine formation. This Vibrio harveyi (Beneckea harveyi) protein is 5-methyltetrahydropteroyltriglutamate--homocysteine methyltransferase.